A 596-amino-acid polypeptide reads, in one-letter code: MHFSVRLSLFLTLASSLPLVSAVPQHEDQAYTFSSSGRSATTDTDPALDVRQETLRTPSAWTRLRDSLVESVWGLPQRSEGCESRPRNRAKTVSRAPATLQARYGEDVVLRFTIKNQEEVKALVEASNILFLDVWGSHDDWVDIRLSRDVIPSLLGLLPPSLQTSHVPLIRDLAQTIYESYPKAGSAPPSQQGPTTRRFSPSASTSKSKPHEAKNIFFQDYQPLSVLLPWMRLLVSMFSSHTTLISVGTTAEGRDIPALRVGVHPTNNAQQAPRRRTIVISGGTHAREWISVSTVSYIAYSFITGYGKSKSITKLLEQFDYVFIPTVNPDGYAYTFSTDRLWRKNRQQTSLSFCPGIDLDHSWGYEWDGNATRSNPCSESYAGDQPFEAVEAREIASWARNEVTVNNVHFVAFVDLHSYSQQILYPYGHSCAHLPANLENLEELGAGLAKAIRKSSRENYDVKAACRGIVASCTGDKDADEPVTSSALERTAGSALDWFFHDLDVRFSYQIKLRDRGSYGFLLPREHIVPTGKEIYRAMVAMGKFLVSPHVLEEDIDGLRASEEPQDYDNDLEDGEDDKDEQDSTVFRAQADDLQS.

A signal peptide spans 1–22 (MHFSVRLSLFLTLASSLPLVSA). Residues 23 to 184 (VPQHEDQAYT…QTIYESYPKA (162 aa)) constitute a propeptide that is removed on maturation. Positions 181-210 (YPKAGSAPPSQQGPTTRRFSPSASTSKSKP) are disordered. The span at 188–207 (PPSQQGPTTRRFSPSASTSK) shows a compositional bias: polar residues. The region spanning 220-546 (DYQPLSVLLP…RAMVAMGKFL (327 aa)) is the Peptidase M14 domain. Zn(2+) is bound by residues His285 and Glu288. Substrate is bound by residues 285–288 (HARE), Arg343, and 360–361 (DH). A disulfide bridge links Cys354 with Cys377. Residue Asn370 is glycosylated (N-linked (GlcNAc...) asparagine). His417 contributes to the Zn(2+) binding site. Position 418-419 (418-419 (SY)) interacts with substrate. Residues 557–596 (DGLRASEEPQDYDNDLEDGEDDKDEQDSTVFRAQADDLQS) form a disordered region. Acidic residues predominate over residues 564 to 583 (EPQDYDNDLEDGEDDKDEQD).

The protein belongs to the peptidase M14 family. Requires Zn(2+) as cofactor.

The protein resides in the vacuole. It is found in the secreted. Inactive carboxypeptidase that may play a role in cell wall organization and biogenesis. This is Inactive metallocarboxypeptidase ECM14 (ECM14) from Trichophyton verrucosum (strain HKI 0517).